Reading from the N-terminus, the 726-residue chain is Dipeptidyl-peptidase 5 (726 aa).

A signal peptide spans 1 to 19 (MAAAKWLIASLAFASSGLA). N-linked (GlcNAc...) asparagine glycans are attached at residues asparagine 96 and asparagine 252. Residues 269–291 (AEPINKRNGPRTPQGIEGASSSP) are disordered. Serine 558 (charge relay system) is an active-site residue. A glycan (N-linked (GlcNAc...) asparagine) is linked at asparagine 605. Catalysis depends on charge relay system residues aspartate 641 and histidine 673. N-linked (GlcNAc...) asparagine glycosylation is present at asparagine 699.

This sequence belongs to the peptidase S9C family.

It localises to the secreted. Functionally, extracellular dipeptidyl-peptidase which removes N-terminal dipeptides sequentially from polypeptides having unsubstituted N-termini. Contributes to pathogenicity. The polypeptide is Dipeptidyl-peptidase 5 (DPP5) (Trichophyton tonsurans (Scalp ringworm fungus)).